Reading from the N-terminus, the 274-residue chain is Thymidylate synthase (274 aa).

Position 21 (Arg-21) interacts with dUMP. His-51 lines the (6R)-5,10-methylene-5,6,7,8-tetrahydrofolate pocket. 123 to 124 contributes to the dUMP binding site; it reads RR. Cys-156 acts as the Nucleophile in catalysis. DUMP contacts are provided by residues 176-179, Asn-187, and 217-219; these read RSAD and HIY. Asp-179 contributes to the (6R)-5,10-methylene-5,6,7,8-tetrahydrofolate binding site. (6R)-5,10-methylene-5,6,7,8-tetrahydrofolate is bound at residue Ser-273.

The protein belongs to the thymidylate synthase family. Bacterial-type ThyA subfamily. As to quaternary structure, homodimer.

The protein resides in the cytoplasm. It catalyses the reaction dUMP + (6R)-5,10-methylene-5,6,7,8-tetrahydrofolate = 7,8-dihydrofolate + dTMP. It participates in pyrimidine metabolism; dTTP biosynthesis. Its function is as follows. Catalyzes the reductive methylation of 2'-deoxyuridine-5'-monophosphate (dUMP) to 2'-deoxythymidine-5'-monophosphate (dTMP) while utilizing 5,10-methylenetetrahydrofolate (mTHF) as the methyl donor and reductant in the reaction, yielding dihydrofolate (DHF) as a by-product. This enzymatic reaction provides an intracellular de novo source of dTMP, an essential precursor for DNA biosynthesis. This chain is Thymidylate synthase, found in Francisella tularensis subsp. novicida (strain U112).